Reading from the N-terminus, the 283-residue chain is Elongation factor Ts (283 aa).

Positions 79–82 are involved in Mg(2+) ion dislocation from EF-Tu; that stretch reads TDFV.

It belongs to the EF-Ts family.

It is found in the cytoplasm. In terms of biological role, associates with the EF-Tu.GDP complex and induces the exchange of GDP to GTP. It remains bound to the aminoacyl-tRNA.EF-Tu.GTP complex up to the GTP hydrolysis stage on the ribosome. The chain is Elongation factor Ts from Shewanella oneidensis (strain ATCC 700550 / JCM 31522 / CIP 106686 / LMG 19005 / NCIMB 14063 / MR-1).